We begin with the raw amino-acid sequence, 155 residues long: Endoribonuclease YbeY (155 aa).

The Zn(2+) site is built by histidine 114, histidine 118, and histidine 124.

The protein belongs to the endoribonuclease YbeY family. It depends on Zn(2+) as a cofactor.

It is found in the cytoplasm. In terms of biological role, single strand-specific metallo-endoribonuclease involved in late-stage 70S ribosome quality control and in maturation of the 3' terminus of the 16S rRNA. In Escherichia coli O1:K1 / APEC, this protein is Endoribonuclease YbeY.